The sequence spans 268 residues: Enoyl-[acyl-carrier-protein] reductase [NADH] (268 aa).

Residues 20-21 (SI), 64-65 (DV), and 95-96 (IA) contribute to the NAD(+) site. Residue Tyr157 participates in substrate binding. Lys164 and Ile193 together coordinate NAD(+).

It belongs to the short-chain dehydrogenases/reductases (SDR) family. FabI subfamily. As to quaternary structure, homodimer. Homotetramer.

It catalyses the reaction a 2,3-saturated acyl-[ACP] + NAD(+) = a (2E)-enoyl-[ACP] + NADH + H(+). The enzyme catalyses a 2,3-saturated acyl-CoA + NAD(+) = a (2E)-enoyl-CoA + NADH + H(+). Its pathway is lipid metabolism; mycolic acid biosynthesis. Enoyl-ACP reductase of the type II fatty acid syntase (FAS-II) system, which is involved in the biosynthesis of mycolic acids, a major component of mycobacterial cell walls. Catalyzes the NADH-dependent reduction of the double bond of 2-trans-enoyl-[acyl-carrier protein], an essential step in the fatty acid elongation cycle of the FAS-II pathway. Shows preference for long-chain fatty acyl thioester substrates, and can also use 2-trans-enoyl-CoAs as alternative substrates. The mycobacterial FAS-II system utilizes the products of the FAS-I system as primers to extend fatty acyl chain lengths up to C56, forming the meromycolate chain that serves as the precursor for final mycolic acids. This Mycobacterium avium protein is Enoyl-[acyl-carrier-protein] reductase [NADH].